Here is a 345-residue protein sequence, read N- to C-terminus: Protein RecA (345 aa).

68 to 75 (GVESSGKT) contributes to the ATP binding site.

This sequence belongs to the RecA family.

Its subcellular location is the cytoplasm. Functionally, can catalyze the hydrolysis of ATP in the presence of single-stranded DNA, the ATP-dependent uptake of single-stranded DNA by duplex DNA, and the ATP-dependent hybridization of homologous single-stranded DNAs. It interacts with LexA causing its activation and leading to its autocatalytic cleavage. The chain is Protein RecA from Aquifex aeolicus (strain VF5).